Reading from the N-terminus, the 489-residue chain is Cysteine--tRNA ligase (489 aa).

Cys29 is a binding site for Zn(2+). The 'HIGH' region motif lies at Ile31 to His41. Positions 209, 234, and 238 each coordinate Zn(2+). The short motif at Lys266–Ser270 is the 'KMSKS' region element. Residue Lys269 participates in ATP binding.

Belongs to the class-I aminoacyl-tRNA synthetase family. In terms of assembly, monomer. The cofactor is Zn(2+).

It is found in the cytoplasm. The enzyme catalyses tRNA(Cys) + L-cysteine + ATP = L-cysteinyl-tRNA(Cys) + AMP + diphosphate. In Desulfotalea psychrophila (strain LSv54 / DSM 12343), this protein is Cysteine--tRNA ligase.